Reading from the N-terminus, the 229-residue chain is Aminopyrimidine aminohydrolase (229 aa).

Position 44 (Asp44) interacts with substrate. The Nucleophile role is filled by Cys137. Substrate-binding residues include Tyr141 and Tyr167. Glu208 acts as the Proton donor in catalysis.

The protein belongs to the TenA family. In terms of assembly, homotetramer.

The enzyme catalyses 4-amino-5-aminomethyl-2-methylpyrimidine + H2O = 4-amino-5-hydroxymethyl-2-methylpyrimidine + NH4(+). It carries out the reaction thiamine + H2O = 5-(2-hydroxyethyl)-4-methylthiazole + 4-amino-5-hydroxymethyl-2-methylpyrimidine + H(+). It functions in the pathway cofactor biosynthesis; thiamine diphosphate biosynthesis. In terms of biological role, catalyzes an amino-pyrimidine hydrolysis reaction at the C5' of the pyrimidine moiety of thiamine compounds, a reaction that is part of a thiamine salvage pathway. Thus, catalyzes the conversion of 4-amino-5-aminomethyl-2-methylpyrimidine to 4-amino-5-hydroxymethyl-2-methylpyrimidine (HMP). Is also able to catalyze the hydrolytic cleavage of thiamine; however, this thiaminase activity may not be physiologically relevant. Therefore, is probably involved in the regeneration of the thiamine pyrimidine from thiamine degraded products present in the environment, rather than in thiamine degradation. This is Aminopyrimidine aminohydrolase from Staphylococcus aureus (strain MRSA252).